We begin with the raw amino-acid sequence, 151 residues long: Deoxyuridine 5'-triphosphate nucleotidohydrolase (151 aa).

Residues 70-72 (RSG), Asn-83, 87-89 (LID), and Met-97 contribute to the substrate site.

This sequence belongs to the dUTPase family. Requires Mg(2+) as cofactor.

The catalysed reaction is dUTP + H2O = dUMP + diphosphate + H(+). Its pathway is pyrimidine metabolism; dUMP biosynthesis; dUMP from dCTP (dUTP route): step 2/2. Functionally, this enzyme is involved in nucleotide metabolism: it produces dUMP, the immediate precursor of thymidine nucleotides and it decreases the intracellular concentration of dUTP so that uracil cannot be incorporated into DNA. This chain is Deoxyuridine 5'-triphosphate nucleotidohydrolase, found in Pseudomonas putida (strain ATCC 47054 / DSM 6125 / CFBP 8728 / NCIMB 11950 / KT2440).